Here is a 256-residue protein sequence, read N- to C-terminus: Putative ankyrin repeat protein FPV231 (256 aa).

ANK repeat units follow at residues 1-20 (MFGN…RIDS), 24-53 (EECL…DTNI), 57-86 (YNRS…DYNL), 90-119 (HGYT…DPNI), and 123-151 (EKHT…DINI).

The polypeptide is Putative ankyrin repeat protein FPV231 (Vertebrata (FPV)).